The chain runs to 100 residues: Small ribosomal subunit protein uS14c (100 aa).

The protein belongs to the universal ribosomal protein uS14 family. In terms of assembly, part of the 30S ribosomal subunit.

The protein resides in the plastid. It localises to the chloroplast. Its function is as follows. Binds 16S rRNA, required for the assembly of 30S particles. In Thalassiosira pseudonana (Marine diatom), this protein is Small ribosomal subunit protein uS14c.